Reading from the N-terminus, the 465-residue chain is Ribulose bisphosphate carboxylase large chain (465 aa).

K4 is subject to N6,N6,N6-trimethyllysine. Substrate is bound by residues N113 and T163. Residue K165 is the Proton acceptor of the active site. Residue K167 coordinates substrate. 3 residues coordinate Mg(2+): K191, D193, and E194. K191 carries the post-translational modification N6-carboxylysine. The active-site Proton acceptor is H284. Positions 285, 317, and 369 each coordinate substrate.

The protein belongs to the RuBisCO large chain family. Type I subfamily. As to quaternary structure, heterohexadecamer of 8 large chains and 8 small chains; disulfide-linked. The disulfide link is formed within the large subunit homodimers. Mg(2+) serves as cofactor. In terms of processing, the disulfide bond which can form in the large chain dimeric partners within the hexadecamer appears to be associated with oxidative stress and protein turnover.

The protein localises to the plastid. It localises to the chloroplast. The enzyme catalyses 2 (2R)-3-phosphoglycerate + 2 H(+) = D-ribulose 1,5-bisphosphate + CO2 + H2O. The catalysed reaction is D-ribulose 1,5-bisphosphate + O2 = 2-phosphoglycolate + (2R)-3-phosphoglycerate + 2 H(+). Its function is as follows. RuBisCO catalyzes two reactions: the carboxylation of D-ribulose 1,5-bisphosphate, the primary event in carbon dioxide fixation, as well as the oxidative fragmentation of the pentose substrate in the photorespiration process. Both reactions occur simultaneously and in competition at the same active site. The protein is Ribulose bisphosphate carboxylase large chain of Cyrilla racemiflora (Swamp titi).